We begin with the raw amino-acid sequence, 303 residues long: Oxygen-dependent coproporphyrinogen-III oxidase (303 aa).

Serine 93 is a substrate binding site. A divalent metal cation is bound by residues histidine 97 and histidine 107. The active-site Proton donor is histidine 107. 109–111 lines the substrate pocket; it reads NVR. A divalent metal cation is bound by residues histidine 146 and histidine 176. The important for dimerization stretch occupies residues 241–276; that stretch reads YVEFNLVYDRGTLFGLQSGGRTESILMSLPPQVRWG. Position 259–261 (259–261) interacts with substrate; it reads GGR.

This sequence belongs to the aerobic coproporphyrinogen-III oxidase family. As to quaternary structure, homodimer. The cofactor is a divalent metal cation.

It is found in the cytoplasm. It carries out the reaction coproporphyrinogen III + O2 + 2 H(+) = protoporphyrinogen IX + 2 CO2 + 2 H2O. Its pathway is porphyrin-containing compound metabolism; protoporphyrin-IX biosynthesis; protoporphyrinogen-IX from coproporphyrinogen-III (O2 route): step 1/1. In terms of biological role, involved in the heme biosynthesis. Catalyzes the aerobic oxidative decarboxylation of propionate groups of rings A and B of coproporphyrinogen-III to yield the vinyl groups in protoporphyrinogen-IX. In Pseudomonas entomophila (strain L48), this protein is Oxygen-dependent coproporphyrinogen-III oxidase.